Reading from the N-terminus, the 78-residue chain is Large ribosomal subunit protein bL28 (78 aa).

A disordered region spans residues 1–20 (MSRVCQVTGKGPVTGNNISH).

It belongs to the bacterial ribosomal protein bL28 family.

The protein is Large ribosomal subunit protein bL28 of Stutzerimonas stutzeri (strain A1501) (Pseudomonas stutzeri).